Consider the following 577-residue polypeptide: Secreted LysM effector Lys4 (577 aa).

The first 19 residues, 1-19 (MRALTAAVLFVAGLTPVLA), serve as a signal peptide directing secretion. A LysM 1 domain is found at 38-85 (AWYTIVKGDGCDTVEKKFKITPEQFFKWNPDVSTDCVKNFWVGNSYCV). Residues 96–121 (TSTTVKSSSTTQKTSSTSSKLSSSSK) show a composition bias toward low complexity. A disordered region spans residues 96–135 (TSTTVKSSSTTQKTSSTSSKLSSSSKPVNTTTTPYSTRNP). The span at 122–135 (PVNTTTTPYSTRNP) shows a compositional bias: polar residues. 4 N-linked (GlcNAc...) asparagine glycosylation sites follow: N124, N140, N216, and N235. 3 LysM domains span residues 251 to 298 (NFYQ…YYCV), 328 to 375 (KWYQ…WYCV), and 408 to 455 (QYWL…YVCV). The span at 464–485 (SGSTTTITGPPTKGSNPPTTTT) shows a compositional bias: low complexity. Residues 464–490 (SGSTTTITGPPTKGSNPPTTTTSGGGG) form a disordered region. The LysM 5 domain maps to 510 to 558 (FWFRGKDGASLFCADIAKDAGVSLPDFLKWNPGVGSNCESLWADTWYCV).

The protein belongs to the secreted LysM effector family.

Its function is as follows. Might have a role in sequestration of chitin oligosaccharides (breakdown products of fungal cell walls that are released during invasion and act as triggers of host immunity) to dampen host defense. The polypeptide is Secreted LysM effector Lys4 (Pochonia chlamydosporia (strain 123) (Metacordyceps chlamydosporia)).